A 358-amino-acid chain; its full sequence is Chondroadherin (358 aa).

The signal sequence occupies residues 1–20; it reads MARALLFSLVFLAILLPALA. The LRRNT domain occupies 21–50; that stretch reads ACPQNCHCHGDLQHVICDKVGLQKIPKVSE. C22 and C37 are oxidised to a cystine. LRR repeat units lie at residues 51-72, 75-96, 99-120, 123-144, 147-168, 171-192, 195-216, 219-240, 244-265, and 268-289; these read TTKL…SFRT, NLVS…AFRG, QLIY…AFDD, ELTY…LLSP, NLFI…AFQG, DLRW…SLDD, NLAK…ALSK, VVEE…AFQS, YLET…AFSG, and TLKH…FPFD. An O-linked (GalNAc...) serine glycan is attached at S143. The region spanning 299–347 is the LRRCT domain; it reads NPWKCTCQLRGLRRWLEAKASRPDATCSSPAKFKGQRIRDTDALRSCKS. 2 disulfide bridges follow: C303–C345 and C305–C325. Residues 322–358 form a disordered region; that stretch reads DATCSSPAKFKGQRIRDTDALRSCKSPTKRSKKAGRH. Basic residues predominate over residues 348 to 358; that stretch reads PTKRSKKAGRH.

Belongs to the small leucine-rich proteoglycan (SLRP) family. SLRP class IV subfamily. In terms of assembly, mostly monomeric. Interacts with collagen type II. In terms of tissue distribution, cartilage.

The protein localises to the secreted. Its subcellular location is the extracellular space. It is found in the extracellular matrix. Functionally, promotes attachment of chondrocytes, fibroblasts, and osteoblasts. This binding is mediated (at least for chondrocytes and fibroblasts) by the integrin alpha(2)beta(1). May play an important role in the regulation of chondrocyte growth and proliferation. The protein is Chondroadherin (Chad) of Mus musculus (Mouse).